Here is a 445-residue protein sequence, read N- to C-terminus: Arginine biosynthesis bifunctional protein ArgJ, mitochondrial (445 aa).

Residues Thr189, Lys215, Thr226, Glu312, Asn440, and Ser445 each coordinate substrate. The active-site Nucleophile is the Thr226.

This sequence belongs to the ArgJ family. In terms of assembly, heterodimer of an alpha and a beta chain. In terms of processing, the alpha and beta chains are autoproteolytically processed from a single precursor protein within the mitochondrion.

The protein localises to the mitochondrion matrix. The enzyme catalyses N(2)-acetyl-L-ornithine + L-glutamate = N-acetyl-L-glutamate + L-ornithine. The catalysed reaction is L-glutamate + acetyl-CoA = N-acetyl-L-glutamate + CoA + H(+). It functions in the pathway amino-acid biosynthesis; L-arginine biosynthesis; L-ornithine and N-acetyl-L-glutamate from L-glutamate and N(2)-acetyl-L-ornithine (cyclic): step 1/1. Its pathway is amino-acid biosynthesis; L-arginine biosynthesis; N(2)-acetyl-L-ornithine from L-glutamate: step 1/4. Functionally, catalyzes two activities which are involved in the cyclic version of arginine biosynthesis: the synthesis of acetylglutamate from glutamate and acetyl-CoA, and of ornithine by transacetylation between acetylornithine and glutamate. In Schizosaccharomyces pombe (strain 972 / ATCC 24843) (Fission yeast), this protein is Arginine biosynthesis bifunctional protein ArgJ, mitochondrial.